A 746-amino-acid chain; its full sequence is Exocyst complex component 3-like protein (746 aa).

Positions 1–23 (MDSAAKDEMQPALSPGPEWPEQE) are disordered. The mediates interaction with EXOC2, EXOC4 and EXOC5 stretch occupies residues 1-370 (MDSAAKDEMQ…DVSQLEPLLT (370 aa)).

It belongs to the SEC6 family. Interacts with EXOC2, EXOC4 and EXOC5; may be part of the exocyst.

Its subcellular location is the cytoplasmic vesicle. It is found in the secretory vesicle. As part of the exocyst, may play a role in regulated exocytosis of insulin granules. This chain is Exocyst complex component 3-like protein (EXOC3L1), found in Homo sapiens (Human).